The primary structure comprises 418 residues: ATP-dependent RNA helicase RhlB (418 aa).

Residues 9–37 (TKFADLPLEKSLISGLTSQGYEYCTPIQA) carry the Q motif motif. In terms of domain architecture, Helicase ATP-binding spans 40-219 (LPITLTGKDI…FEHMNDPESI (180 aa)). 53 to 60 (AQTGTGKT) provides a ligand contact to ATP. The short motif at 165 to 168 (DEAD) is the DEAD box element. The Helicase C-terminal domain occupies 243–390 (KILLLLSLIE…CSEYDKNAML (148 aa)).

This sequence belongs to the DEAD box helicase family. RhlB subfamily. In terms of assembly, component of the RNA degradosome, which is a multiprotein complex involved in RNA processing and mRNA degradation.

The protein resides in the cytoplasm. The catalysed reaction is ATP + H2O = ADP + phosphate + H(+). Functionally, DEAD-box RNA helicase involved in RNA degradation. Has RNA-dependent ATPase activity and unwinds double-stranded RNA. The chain is ATP-dependent RNA helicase RhlB from Psychromonas ingrahamii (strain DSM 17664 / CCUG 51855 / 37).